Here is a 1229-residue protein sequence, read N- to C-terminus: ABC transporter B family member 22 (1229 aa).

6 consecutive transmembrane segments (helical) span residues 22 to 42, 69 to 89, 145 to 167, 171 to 193, 251 to 271, and 274 to 294; these read MGLGLIGAVGDGFITPIIFFI, VALLYVAGASLVICFVEGYCW, LPNFLMSASAFVASYIVGFIMLW, IVGFPFFILLLIPGLMCGRALIN, GIAIGSNGVTYAIWGFMTWYG, and MVMYHGAKGGTIFAVIICITY. The ABC transmembrane type-1 1 domain occupies 22–311; sequence MGLGLIGAVG…GLSNLKYFSE (290 aa). An ABC transporter 1 domain is found at 346-582; sequence VQFKHVKFMY…VDGQYTSLVR (237 aa). 381–388 is an ATP binding site; sequence GGSGSGKS. N-linked (GlcNAc...) asparagine glycans are attached at residues asparagine 529 and asparagine 594. The next 2 helical transmembrane spans lie at 661-681 and 703-723; these read ALYGCLSAVLYGALHPIYAYA and IYVLLFVGLAVLCFLISIIQQ. The ABC transmembrane type-1 2 domain occupies 661-949; sequence ALYGCLSAVL…AGAMTMDLAK (289 aa). Asparagine 758 carries N-linked (GlcNAc...) asparagine glycosylation. Helical transmembrane passes span 782 to 800, 807 to 823, 885 to 908, and 923 to 943; these read VSLLVQTISAVSVACTLGL, SIVMIAIQPVVVGCFYT, WLAGIVLATSRSLMTCTSALNYWY, and FFELFILFVSTGRVIADAGAM. One can recognise an ABC transporter 2 domain in the interval 984–1222; that stretch reads IKFVNVDFAY…GPTGVYFSLV (239 aa). An N-linked (GlcNAc...) asparagine glycan is attached at asparagine 1004. 1019 to 1026 provides a ligand contact to ATP; sequence GPSGSGKS. The N-linked (GlcNAc...) asparagine glycan is linked to asparagine 1157.

This sequence belongs to the ABC transporter superfamily. ABCB family. Multidrug resistance exporter (TC 3.A.1.201) subfamily.

Its subcellular location is the membrane. The chain is ABC transporter B family member 22 (ABCB22) from Arabidopsis thaliana (Mouse-ear cress).